The chain runs to 382 residues: uncharacterized protein (382 aa).

10 helical membrane-spanning segments follow: residues 8 to 28 (VLLLLCGLLLFTISIAVLNTL), 41 to 61 (WQVGMVSSSYFTGNLVGTLIA), 73 to 93 (SYHCSCILFALATCGLMLTVD), 94 to 114 (FWSWLGWRFLAGIACALIWVI), 133 to 153 (AAYMMVYYLGTVIGQLLLGIV), 157 to 177 (LLSVIPWVGALVITAMLPLLF), 208 to 228 (GCIISGVLLGSLYGLLPLYLS), 274 to 294 (VVILGSVAILGNYAMAPALFI), 325 to 345 (ALLMSYTLGSLAGPTMTSLLM), and 349 to 369 (SDNLLFIMIAGVAFVYLMMLL).

This sequence belongs to the major facilitator superfamily. YcaD (TC 2.A.1.26) family.

It localises to the cell inner membrane. This is an uncharacterized protein from Yersinia pseudotuberculosis serotype O:3 (strain YPIII).